Consider the following 804-residue polypeptide: Probable replication endonuclease from prophage-like region 1 (804 aa).

Active-site O-(5'-phospho-DNA)-tyrosine intermediate residues include tyrosine 498 and tyrosine 502.

This sequence belongs to the phage GPA family.

Its function is as follows. Possible endonuclease which induces a single-strand cut and initiates DNA replication. The sequence is that of Probable replication endonuclease from prophage-like region 1 from Salmonella typhi.